A 538-amino-acid chain; its full sequence is Chaperonin GroEL (538 aa).

ATP is bound by residues 29 to 32 (TIGP), 86 to 90 (DGTTT), G413, 476 to 478 (NAA), and D492.

Belongs to the chaperonin (HSP60) family. In terms of assembly, forms a cylinder of 14 subunits composed of two heptameric rings stacked back-to-back. Interacts with the co-chaperonin GroES.

The protein localises to the cytoplasm. It catalyses the reaction ATP + H2O + a folded polypeptide = ADP + phosphate + an unfolded polypeptide.. Together with its co-chaperonin GroES, plays an essential role in assisting protein folding. The GroEL-GroES system forms a nano-cage that allows encapsulation of the non-native substrate proteins and provides a physical environment optimized to promote and accelerate protein folding. The sequence is that of Chaperonin GroEL from Staphylococcus aureus (strain USA300).